The following is a 154-amino-acid chain: Superoxide dismutase [Cu-Zn] (154 aa).

Residues histidine 47, histidine 49, and histidine 64 each coordinate Cu cation. The cysteines at positions 58 and 147 are disulfide-linked. The Zn(2+) site is built by histidine 64, histidine 72, histidine 81, and aspartate 84. Position 121 (histidine 121) interacts with Cu cation. A substrate-binding site is contributed by arginine 144.

Belongs to the Cu-Zn superoxide dismutase family. Homodimer. It depends on Cu cation as a cofactor. Zn(2+) serves as cofactor.

It localises to the cytoplasm. The catalysed reaction is 2 superoxide + 2 H(+) = H2O2 + O2. Destroys radicals which are normally produced within the cells and which are toxic to biological systems. The protein is Superoxide dismutase [Cu-Zn] (SOD1) of Eremothecium gossypii (strain ATCC 10895 / CBS 109.51 / FGSC 9923 / NRRL Y-1056) (Yeast).